A 209-amino-acid chain; its full sequence is Molybdenum cofactor guanylyltransferase (209 aa).

Residues 14 to 16 (LAG), lysine 31, and aspartate 104 each bind GTP. Mg(2+) is bound at residue aspartate 104.

It belongs to the MobA family. As to quaternary structure, monomer. Mg(2+) serves as cofactor.

Its subcellular location is the cytoplasm. The catalysed reaction is Mo-molybdopterin + GTP + H(+) = Mo-molybdopterin guanine dinucleotide + diphosphate. Its function is as follows. Transfers a GMP moiety from GTP to Mo-molybdopterin (Mo-MPT) cofactor (Moco or molybdenum cofactor) to form Mo-molybdopterin guanine dinucleotide (Mo-MGD) cofactor. This is Molybdenum cofactor guanylyltransferase from Helicobacter pylori (strain J99 / ATCC 700824) (Campylobacter pylori J99).